A 288-amino-acid chain; its full sequence is DegV domain-containing protein MYPU_3590 (288 aa).

The region spanning 3–275 (IAIVIDSSSG…LGAIAISLVK (273 aa)) is the DegV domain. Ser-61 and Ser-92 together coordinate hexadecanoate.

Its function is as follows. May bind long-chain fatty acids, such as palmitate, and may play a role in lipid transport or fatty acid metabolism. This Mycoplasmopsis pulmonis (strain UAB CTIP) (Mycoplasma pulmonis) protein is DegV domain-containing protein MYPU_3590.